The chain runs to 206 residues: Large ribosomal subunit protein bL25 (206 aa).

A disordered region spans residues 184–206 (AEEAAAEVAEPEVIKKGKEEEEE). Over residues 195-206 (EVIKKGKEEEEE) the composition is skewed to basic and acidic residues.

The protein belongs to the bacterial ribosomal protein bL25 family. CTC subfamily. Part of the 50S ribosomal subunit; part of the 5S rRNA/L5/L18/L25 subcomplex. Contacts the 5S rRNA. Binds to the 5S rRNA independently of L5 and L18.

Functionally, this is one of the proteins that binds to the 5S RNA in the ribosome where it forms part of the central protuberance. In Thermus thermophilus (strain ATCC BAA-163 / DSM 7039 / HB27), this protein is Large ribosomal subunit protein bL25.